Consider the following 300-residue polypeptide: Small ribosomal subunit biogenesis GTPase RsgA (300 aa).

Residues 69–231 (RSDEMRVKQF…LIDSPGFQAF (163 aa)) form the CP-type G domain. GTP contacts are provided by residues 119 to 122 (NKID) and 172 to 180 (GQSGMGKST). Zn(2+) is bound by residues Cys-255, Cys-260, His-262, and Cys-268.

Belongs to the TRAFAC class YlqF/YawG GTPase family. RsgA subfamily. Monomer. Associates with 30S ribosomal subunit, binds 16S rRNA. Zn(2+) is required as a cofactor.

Its subcellular location is the cytoplasm. Its function is as follows. One of several proteins that assist in the late maturation steps of the functional core of the 30S ribosomal subunit. Helps release RbfA from mature subunits. May play a role in the assembly of ribosomal proteins into the subunit. Circularly permuted GTPase that catalyzes slow GTP hydrolysis, GTPase activity is stimulated by the 30S ribosomal subunit. The chain is Small ribosomal subunit biogenesis GTPase RsgA from Bordetella bronchiseptica (strain ATCC BAA-588 / NCTC 13252 / RB50) (Alcaligenes bronchisepticus).